The sequence spans 374 residues: Methylthioribose-1-phosphate isomerase (374 aa).

Serine 2 carries the post-translational modification N-acetylserine. The Proton donor role is filled by aspartate 253.

It belongs to the eIF-2B alpha/beta/delta subunits family. MtnA subfamily.

It localises to the cytoplasm. Its subcellular location is the nucleus. It catalyses the reaction 5-(methylsulfanyl)-alpha-D-ribose 1-phosphate = 5-(methylsulfanyl)-D-ribulose 1-phosphate. The protein operates within amino-acid biosynthesis; L-methionine biosynthesis via salvage pathway; L-methionine from S-methyl-5-thio-alpha-D-ribose 1-phosphate: step 1/6. Its function is as follows. Catalyzes the interconversion of methylthioribose-1-phosphate (MTR-1-P) into methylthioribulose-1-phosphate (MTRu-1-P). This chain is Methylthioribose-1-phosphate isomerase, found in Arabidopsis thaliana (Mouse-ear cress).